The primary structure comprises 132 residues: Small ribosomal subunit protein uS11 (132 aa).

Over residues 1-16 (MAAGMKGKRSRRRKER) the composition is skewed to basic residues. The segment at 1 to 20 (MAAGMKGKRSRRRKERKNVE) is disordered.

The protein belongs to the universal ribosomal protein uS11 family. In terms of assembly, part of the 30S ribosomal subunit. Interacts with proteins S7 and S18. Binds to IF-3.

Located on the platform of the 30S subunit, it bridges several disparate RNA helices of the 16S rRNA. Forms part of the Shine-Dalgarno cleft in the 70S ribosome. The chain is Small ribosomal subunit protein uS11 from Clostridium botulinum (strain Hall / ATCC 3502 / NCTC 13319 / Type A).